Reading from the N-terminus, the 500-residue chain is MFHIIDLALKWDERRVKIVDELKSKGINPYPHKYDITHTIIDIKKMERSDKPTDAFAFDISTAGRVANIRRHGKISFVDIFDEGERLQLQLRVNELGDRYDKFFEIVDRGDILGVKGDLLYTIKGELTLRIKDYVLLSKSLIEPPDWSKLSPEFRYAHRYVDFLYNDLARRNMEIRYSTIRRIREFLYSKGFMEVETPILQPVYGGALAKPFMSHVNYLNENWYLRISLELYLKRYIVGGFNKVFEIGKVFRNEDIDVTHNPEFTLLELYWAYADYNDIMRLTEEMLQDVVKNINNDSKIKYSIGGKEYTIEFSQFRKITMIDSLTEVLGKDVDKMSDEELKSLMDKNGLKPRGNMYIRGLMIEKLFDKLVTPTLIQPTFVLDYPVETTPLCKPHRSKQGLVERFELYVAGMELANAYTELNDPIIQDMLFKQEQEMFKRGDEEAHPYDVDFVRALSYGMPPTGGLGIGIDRLIMLLTNNMSIKEIIPYPMLSAKVIQED.

Positions 406 and 413 each coordinate Mg(2+).

This sequence belongs to the class-II aminoacyl-tRNA synthetase family. Homodimer. The cofactor is Mg(2+).

The protein localises to the cytoplasm. The catalysed reaction is tRNA(Lys) + L-lysine + ATP = L-lysyl-tRNA(Lys) + AMP + diphosphate. The polypeptide is Lysine--tRNA ligase (Sulfolobus acidocaldarius (strain ATCC 33909 / DSM 639 / JCM 8929 / NBRC 15157 / NCIMB 11770)).